The following is a 188-amino-acid chain: MATVSTNEFKGGLKLMLDNEPCVILENEYVKPGKGQAFNRVKIRKLLSGKVLEKTFKSGDTCEVADVMDIDLDYLYSDGEFYHFMNNETFEQIAADAKAVGDNAKWLVENNTCMITLWNGNPITVTPPNFVELEVTDTDPGLKGDTQGTGGKPATLSTGAVVRVPLFIAIGEVIKVDTRTAEYVGRVK.

Position 34 is an N6-(3,6-diaminohexanoyl)-5-hydroxylysine (Lys-34).

The protein belongs to the elongation factor P family. Post-translationally, may be beta-lysylated on the epsilon-amino group of Lys-34 by the combined action of EpmA and EpmB, and then hydroxylated on the C5 position of the same residue by EpmC (if this protein is present). Lysylation is critical for the stimulatory effect of EF-P on peptide-bond formation. The lysylation moiety may extend toward the peptidyltransferase center and stabilize the terminal 3-CCA end of the tRNA. Hydroxylation of the C5 position on Lys-34 may allow additional potential stabilizing hydrogen-bond interactions with the P-tRNA.

It is found in the cytoplasm. It participates in protein biosynthesis; polypeptide chain elongation. Functionally, involved in peptide bond synthesis. Alleviates ribosome stalling that occurs when 3 or more consecutive Pro residues or the sequence PPG is present in a protein, possibly by augmenting the peptidyl transferase activity of the ribosome. Modification of Lys-34 is required for alleviation. The protein is Elongation factor P of Vibrio campbellii (strain ATCC BAA-1116).